The sequence spans 501 residues: Vitamin D 25-hydroxylase (501 aa).

A signal peptide spans 1–26; that stretch reads MWKLWRAEEGAAALGGALFLLLFALG. Residue Ala-250 coordinates substrate. Cys-448 contacts heme.

This sequence belongs to the cytochrome P450 family. As to quaternary structure, homodimer. Heme serves as cofactor.

The protein resides in the endoplasmic reticulum membrane. The protein localises to the microsome membrane. The catalysed reaction is calciol + reduced [NADPH--hemoprotein reductase] + O2 = calcidiol + oxidized [NADPH--hemoprotein reductase] + H2O + H(+). It carries out the reaction vitamin D2 + reduced [NADPH--hemoprotein reductase] + O2 = 25-hydroxyvitamin D2 + oxidized [NADPH--hemoprotein reductase] + H2O + H(+). It catalyses the reaction 1alpha-hydroxyvitamin D2 + reduced [NADPH--hemoprotein reductase] + O2 = 1alpha,25-dihydroxyvitamin D2 + oxidized [NADPH--hemoprotein reductase] + H2O + H(+). The enzyme catalyses alfacalcidol + reduced [NADPH--hemoprotein reductase] + O2 = calcitriol + oxidized [NADPH--hemoprotein reductase] + H2O + H(+). It participates in hormone biosynthesis; vitamin D biosynthesis. In terms of biological role, a cytochrome P450 monooxygenase involved in activation of vitamin D precursors. Catalyzes hydroxylation at C-25 of both forms of vitamin D, vitamin D(2) and D(3) (calciol). Can metabolize vitamin D analogs/prodrugs 1alpha-hydroxyvitamin D(2) (doxercalciferol) and 1alpha-hydroxyvitamin D(3) (alfacalcidol) forming 25-hydroxy derivatives. Mechanistically, uses molecular oxygen inserting one oxygen atom into a substrate, and reducing the second into a water molecule, with two electrons provided by NADPH via cytochrome P450 reductase (CPR; NADPH-ferrihemoprotein reductase). The protein is Vitamin D 25-hydroxylase (CYP2R1) of Homo sapiens (Human).